Consider the following 586-residue polypeptide: Thioredoxin domain-containing protein 3 (586 aa).

Residues 10-116 (LQSVVNSQNL…NRKVITLIDE (107 aa)) enclose the Thioredoxin domain. Cysteines 39 and 42 form a disulfide. NDK stretches follow at residues 157-254 (MAII…VLEE), 312-452 (VQTT…STLA), and 453-586 (LIKP…NPEN).

It in the C-terminal section; belongs to the NDK family. In terms of assembly, monomer. Testis-specific. Expressed mainly in round spermatids.

The protein localises to the cytoplasm. Its function is as follows. Probably required during the final stages of sperm tail maturation in the testis and/or epididymis, where extensive disulfide bonding of fibrous sheath (FS) proteins occurs. In vitro, it has neither nucleoside diphosphate kinase (NDPK) activity nor reducing activity on disulfide bonds. Exhibits a 3'-5' exonuclease activity with a preference for single-stranded DNA, suggesting roles in DNA proofreading and repair. The protein is Thioredoxin domain-containing protein 3 (Nme8) of Mus musculus (Mouse).